A 519-amino-acid chain; its full sequence is 2,3-bisphosphoglycerate-independent phosphoglycerate mutase (519 aa).

Asp-18 and Ser-68 together coordinate Mn(2+). The active-site Phosphoserine intermediate is Ser-68. Substrate-binding positions include His-129, 159 to 160 (RD), Arg-191, Arg-197, 267 to 270 (RADR), and Lys-341. Positions 408, 412, 449, 450, and 468 each coordinate Mn(2+).

It belongs to the BPG-independent phosphoglycerate mutase family. In terms of assembly, monomer. The cofactor is Mn(2+).

It carries out the reaction (2R)-2-phosphoglycerate = (2R)-3-phosphoglycerate. It participates in carbohydrate degradation; glycolysis; pyruvate from D-glyceraldehyde 3-phosphate: step 3/5. Functionally, catalyzes the interconversion of 2-phosphoglycerate and 3-phosphoglycerate. The chain is 2,3-bisphosphoglycerate-independent phosphoglycerate mutase from Coxiella burnetii (strain RSA 331 / Henzerling II).